Here is a 495-residue protein sequence, read N- to C-terminus: MQGTKIRLLAGSLLMLASAGYVQADALQPDPAWQQGTLANGLQWQVLATPQRPSDRIEVRLQVNTGSLTESTQQSGFSHAIPRIALTQSGGLDAAQARSLWQQGFDPKRPMPPVIVSYDSTLYSLSLPNNRNDLLKEALTYLANVSGKLTITPETVNHALSSEDMVATWPADTKEGWWRYRLKGSALLGHDPAEPLKQPVDAAKIQAFYEKWYTPDAMTLIVVGNIDARSVAEQINKTFGTLKGKRETPAPVPTLSPLRAESVSIMTDAVRQDRLSIMWDTPWQPIRESAALLRYWQADLAREALFWHIQQELTKNNAKDIGLGFDCRVLFLRAQCAINIESPNDKLNTNLSLVANELAKVRDKGLSEEEFTALVAQKNLELQKLFATYARTDTDILTGQRMRSLQNQVVDIAPEQYQKLRQNFLNSLTVDMLNQNLRQQLSQEMALILLQPQGEPEFNMKALKATWDEIMVPATAAAVEADEAHPEVTETPAAQ.

A signal peptide spans 1–24; the sequence is MQGTKIRLLAGSLLMLASAGYVQA.

It belongs to the peptidase M16 family.

It is found in the periplasm. The chain is Protein YhjJ (yhjJ) from Salmonella typhi.